Consider the following 285-residue polypeptide: Gas vesicle protein C2 (285 aa).

6 consecutive repeat copies span residues E22–R52, A53–A84, A85–T122, T123–Q155, E156–A188, and A189–V220. The tract at residues E22–V220 is 6 X approximate tandem repeats.

This sequence belongs to the halobacterial gas vesicle GvpC family.

It is found in the gas vesicle. In terms of biological role, confers stability, involved in shaping gas vesicles (GV), hollow, gas filled proteinaceous nanostructures. GVs allow positioning of halobacteria at an optimal depth for growth in the poorly aerated, shallow brine pools of their habitat. Functionally, expression of 2 c-vac DNA fragments containing 2 divergently transcribed regions (gvpE-gvpF-gvpG-gvpH-gvpI-gvpJ-gvpK-gvpL-gvpM and gvpA-gvpC-gvpN-gvpO) allows H.volcanii to produce gas vesicles. This Halobacterium salinarum (strain ATCC 700922 / JCM 11081 / NRC-1) (Halobacterium halobium) protein is Gas vesicle protein C2.